A 332-amino-acid chain; its full sequence is tRNA U34 carboxymethyltransferase (332 aa).

Residues K96, W110, K115, G135, 186–187, M204, Y208, and R323 each bind carboxy-S-adenosyl-L-methionine; that span reads LE.

This sequence belongs to the class I-like SAM-binding methyltransferase superfamily. CmoB family. As to quaternary structure, homotetramer.

It catalyses the reaction carboxy-S-adenosyl-L-methionine + 5-hydroxyuridine(34) in tRNA = 5-carboxymethoxyuridine(34) in tRNA + S-adenosyl-L-homocysteine + H(+). In terms of biological role, catalyzes carboxymethyl transfer from carboxy-S-adenosyl-L-methionine (Cx-SAM) to 5-hydroxyuridine (ho5U) to form 5-carboxymethoxyuridine (cmo5U) at position 34 in tRNAs. In Hydrogenovibrio crunogenus (strain DSM 25203 / XCL-2) (Thiomicrospira crunogena), this protein is tRNA U34 carboxymethyltransferase.